Reading from the N-terminus, the 260-residue chain is Acyl-coenzyme A diphosphatase FITM2 (260 aa).

At 1–23 the chain is on the cytoplasmic side; that stretch reads MERLENCAQMFQRRFLNESFRRH. Residues 24 to 44 form a helical membrane-spanning segment; sequence CPVLLACIVLGGSLLKELCPL. At 45–57 the chain is on the lumenal side; it reads PDSYWNNKRNVLN. A helical transmembrane segment spans residues 58 to 78; it reads VYFVKFSWGWTLWLLLPFIAL. Topologically, residues 79-93 are cytoplasmic; that stretch reads TNYKLTRSTTKVLRR. A helical membrane pass occupies residues 94 to 114; it reads LSSLLVSTLIWYLCTNLFLYI. At 115 to 145 the chain is on the lumenal side; the sequence is ENITGSCYESEAMSDPKEHQDRRECRLHSGY. Residues 146 to 166 form a helical membrane-spanning segment; the sequence is WHGFDISGHCFLLSYCILLIL. The active site involves His154. Over 167 to 189 the chain is Cytoplasmic; the sequence is EETSIISNIRFERHWHRMAINAQ. 2 helical membrane passes run 190 to 210 and 211 to 231; these read FAAL…TAVY and FHNI…WYIT. His212 is an active-site residue. The Cytoplasmic portion of the chain corresponds to 232 to 260; sequence YRWWYLQPISPGLPPASASRSGKEPIYRN.

Belongs to the FIT family. FIT2 subfamily.

Its subcellular location is the endoplasmic reticulum membrane. It carries out the reaction an acyl-CoA + H2O = an acyl-4'-phosphopantetheine + adenosine 3',5'-bisphosphate + 2 H(+). In terms of biological role, fatty acyl-coenzyme A (CoA) diphosphatase that hydrolyzes fatty acyl-CoA to yield acyl-4'-phosphopantetheine and adenosine 3',5'-bisphosphate. Preferentially hydrolyzes unsaturated long-chain acyl-CoA substrates in the endoplasmic reticulum (ER) lumen. This catalytic activity is required for maintaining ER structure and for lipid droplets (LDs) biogenesis, which are lipid storage organelles involved in maintaining lipid and energy homeostasis. May directly bind to diacylglycerol (DAGs) and triacylglycerol, which is also important for LD biogenesis. May support directional budding of nacent LDs from the ER into the cytosol by reducing DAG levels at sites of LD formation. May play a role in the regulation of cell morphology, ER morphology and cytoskeletal organization. This chain is Acyl-coenzyme A diphosphatase FITM2, found in Xenopus tropicalis (Western clawed frog).